The following is a 421-amino-acid chain: Gamma-glutamyl phosphate reductase (421 aa).

Belongs to the gamma-glutamyl phosphate reductase family.

The protein resides in the cytoplasm. The enzyme catalyses L-glutamate 5-semialdehyde + phosphate + NADP(+) = L-glutamyl 5-phosphate + NADPH + H(+). The protein operates within amino-acid biosynthesis; L-proline biosynthesis; L-glutamate 5-semialdehyde from L-glutamate: step 2/2. Functionally, catalyzes the NADPH-dependent reduction of L-glutamate 5-phosphate into L-glutamate 5-semialdehyde and phosphate. The product spontaneously undergoes cyclization to form 1-pyrroline-5-carboxylate. This is Gamma-glutamyl phosphate reductase from Pseudomonas aeruginosa (strain UCBPP-PA14).